The following is a 159-amino-acid chain: MKTAIYPGSFDPVTYGHIDIIERGANLFDKLIVAVLLNPSKKPLFSVEERVELLKAVTYDISNVEIDYFDGLLVDYAKKVKANAIIKGLRMVSDFEYEFQMALINKKLNPSLETIFLMTNAKYGYLSSSVVKEIAQFGGCLSEFVPDIVAQKLMEKFSR.

Substrate is bound at residue serine 9. ATP is bound by residues 9–10 and histidine 17; that span reads SF. 3 residues coordinate substrate: lysine 41, leucine 73, and lysine 87. ATP is bound by residues 88–90, glutamate 98, and 123–129; these read GLR and YGYLSSS.

The protein belongs to the bacterial CoaD family. In terms of assembly, homohexamer. Requires Mg(2+) as cofactor.

It localises to the cytoplasm. It catalyses the reaction (R)-4'-phosphopantetheine + ATP + H(+) = 3'-dephospho-CoA + diphosphate. It functions in the pathway cofactor biosynthesis; coenzyme A biosynthesis; CoA from (R)-pantothenate: step 4/5. Reversibly transfers an adenylyl group from ATP to 4'-phosphopantetheine, yielding dephospho-CoA (dPCoA) and pyrophosphate. The chain is Phosphopantetheine adenylyltransferase from Thermoanaerobacter pseudethanolicus (strain ATCC 33223 / 39E) (Clostridium thermohydrosulfuricum).